Reading from the N-terminus, the 103-residue chain is Large ribosomal subunit protein bL21 (103 aa).

Belongs to the bacterial ribosomal protein bL21 family. In terms of assembly, part of the 50S ribosomal subunit. Contacts protein L20.

In terms of biological role, this protein binds to 23S rRNA in the presence of protein L20. The chain is Large ribosomal subunit protein bL21 from Pseudomonas aeruginosa (strain LESB58).